Consider the following 453-residue polypeptide: Bifunctional protein GlmU (453 aa).

Residues 1 to 225 are pyrophosphorylase; it reads MNIVILAAGT…EWETLGVNSK (225 aa). UDP-N-acetyl-alpha-D-glucosamine is bound by residues 6 to 9, Lys-20, Gln-71, 76 to 77, 98 to 100, Gly-135, Glu-150, Asn-165, and Asn-223; these read LAAG, GT, and YGD. Asp-100 is a binding site for Mg(2+). Residue Asn-223 coordinates Mg(2+). Positions 226-246 are linker; it reads AQLAELERIHQRNVADALLVD. An N-acetyltransferase region spans residues 247–453; the sequence is GVTLADPARV…GYVRPVKKKS (207 aa). Residues Arg-329 and Lys-347 each coordinate UDP-N-acetyl-alpha-D-glucosamine. Catalysis depends on His-359, which acts as the Proton acceptor. UDP-N-acetyl-alpha-D-glucosamine is bound by residues Tyr-362 and Asn-373. Residues Ala-376, 382-383, Ser-401, and Ala-419 contribute to the acetyl-CoA site; that span reads NY.

It in the N-terminal section; belongs to the N-acetylglucosamine-1-phosphate uridyltransferase family. The protein in the C-terminal section; belongs to the transferase hexapeptide repeat family. Homotrimer. Requires Mg(2+) as cofactor.

The protein localises to the cytoplasm. The enzyme catalyses alpha-D-glucosamine 1-phosphate + acetyl-CoA = N-acetyl-alpha-D-glucosamine 1-phosphate + CoA + H(+). It catalyses the reaction N-acetyl-alpha-D-glucosamine 1-phosphate + UTP + H(+) = UDP-N-acetyl-alpha-D-glucosamine + diphosphate. Its pathway is nucleotide-sugar biosynthesis; UDP-N-acetyl-alpha-D-glucosamine biosynthesis; N-acetyl-alpha-D-glucosamine 1-phosphate from alpha-D-glucosamine 6-phosphate (route II): step 2/2. It participates in nucleotide-sugar biosynthesis; UDP-N-acetyl-alpha-D-glucosamine biosynthesis; UDP-N-acetyl-alpha-D-glucosamine from N-acetyl-alpha-D-glucosamine 1-phosphate: step 1/1. It functions in the pathway bacterial outer membrane biogenesis; LPS lipid A biosynthesis. Its function is as follows. Catalyzes the last two sequential reactions in the de novo biosynthetic pathway for UDP-N-acetylglucosamine (UDP-GlcNAc). The C-terminal domain catalyzes the transfer of acetyl group from acetyl coenzyme A to glucosamine-1-phosphate (GlcN-1-P) to produce N-acetylglucosamine-1-phosphate (GlcNAc-1-P), which is converted into UDP-GlcNAc by the transfer of uridine 5-monophosphate (from uridine 5-triphosphate), a reaction catalyzed by the N-terminal domain. In Burkholderia orbicola (strain AU 1054), this protein is Bifunctional protein GlmU.